The following is a 337-amino-acid chain: Holliday junction branch migration complex subunit RuvB (337 aa).

The large ATPase domain (RuvB-L) stretch occupies residues 4 to 184 (QDRIISAELK…FGIVQRLEFY (181 aa)). Residues Ile-23, Arg-24, Gly-65, Lys-68, Thr-69, Thr-70, 131–133 (EDY), Arg-174, Tyr-184, and Arg-221 each bind ATP. Mg(2+) is bound at residue Thr-69. Positions 185–255 (DVESLTTIVA…VAQRALDMLS (71 aa)) are small ATPAse domain (RuvB-S). The head domain (RuvB-H) stretch occupies residues 258–337 (SQGFDHLDRR…FNYQLPSDFK (80 aa)). 2 residues coordinate DNA: Arg-313 and Arg-318.

This sequence belongs to the RuvB family. Homohexamer. Forms an RuvA(8)-RuvB(12)-Holliday junction (HJ) complex. HJ DNA is sandwiched between 2 RuvA tetramers; dsDNA enters through RuvA and exits via RuvB. An RuvB hexamer assembles on each DNA strand where it exits the tetramer. Each RuvB hexamer is contacted by two RuvA subunits (via domain III) on 2 adjacent RuvB subunits; this complex drives branch migration. In the full resolvosome a probable DNA-RuvA(4)-RuvB(12)-RuvC(2) complex forms which resolves the HJ.

It is found in the cytoplasm. It catalyses the reaction ATP + H2O = ADP + phosphate + H(+). Functionally, the RuvA-RuvB-RuvC complex processes Holliday junction (HJ) DNA during genetic recombination and DNA repair, while the RuvA-RuvB complex plays an important role in the rescue of blocked DNA replication forks via replication fork reversal (RFR). RuvA specifically binds to HJ cruciform DNA, conferring on it an open structure. The RuvB hexamer acts as an ATP-dependent pump, pulling dsDNA into and through the RuvAB complex. RuvB forms 2 homohexamers on either side of HJ DNA bound by 1 or 2 RuvA tetramers; 4 subunits per hexamer contact DNA at a time. Coordinated motions by a converter formed by DNA-disengaged RuvB subunits stimulates ATP hydrolysis and nucleotide exchange. Immobilization of the converter enables RuvB to convert the ATP-contained energy into a lever motion, pulling 2 nucleotides of DNA out of the RuvA tetramer per ATP hydrolyzed, thus driving DNA branch migration. The RuvB motors rotate together with the DNA substrate, which together with the progressing nucleotide cycle form the mechanistic basis for DNA recombination by continuous HJ branch migration. Branch migration allows RuvC to scan DNA until it finds its consensus sequence, where it cleaves and resolves cruciform DNA. The sequence is that of Holliday junction branch migration complex subunit RuvB from Marinomonas sp. (strain MWYL1).